Consider the following 271-residue polypeptide: MINKDTQLCMSLSGRPSNFGTTFHNYLYDKLGLNFIYKAFTTQDIEHAIKGVRALGIRGCAVSMPFKETCMPFLDEIHPSAQAIESVNTIVNDNGFLRAYNTDYIAIVKLIEKYHLNKNAKVIVHGSGGMAKAVVAAFKNSGFEKLKIYARNVKTGQYLAALYGYAYINSLENQQADILVNVTSIGMKGGKEEMDLAFPKAFIDNASVAFDVVAMPVETPFIRYAQARGKQTISGAAVIVLQAVEQFELYTHQRPSDELIAEAAAFARTKF.

The Proton donor/acceptor role is filled by lysine 67. A substrate-binding site is contributed by aspartate 103. NADP(+)-binding positions include glycine 126 to methionine 130, lysine 154, and serine 184.

It belongs to the shikimate dehydrogenase-like family. Homodimer.

It catalyses the reaction shikimate + NADP(+) = 3-dehydroshikimate + NADPH + H(+). Functionally, in vitro, is able to catalyze the NADP(+)-dependent oxidation of shikimate to 3-dehydroshikimate. However, has much lower activity than classical shikimate dehydrogenases AroE, indicating that shikimate may not be the biological substrate. Cannot utilize NAD(+) instead of NADP(+). Is not able to catalyze the oxidation of quinate. This Haemophilus influenzae (strain ATCC 51907 / DSM 11121 / KW20 / Rd) protein is Shikimate dehydrogenase-like protein HI_0607.